The following is a 487-amino-acid chain: Probable UDP-N-acetylglucosamine pyrophosphorylase (487 aa).

The Substrate binding signature appears at 105-108 (LAGG). UTP-binding positions include 105–108 (LAGG), Lys119, Gln198, and Gly225. Position 226 (Asn226) interacts with substrate. UTP is bound at residue Asp256. The Substrate binding signature appears at 307-308 (EY). Position 382 (Lys382) interacts with UTP. Residue Lys412 participates in substrate binding.

It belongs to the UDPGP type 1 family.

It localises to the cytoplasm. The catalysed reaction is N-acetyl-alpha-D-glucosamine 1-phosphate + UTP + H(+) = UDP-N-acetyl-alpha-D-glucosamine + diphosphate. It functions in the pathway nucleotide-sugar biosynthesis; UDP-N-acetyl-alpha-D-glucosamine biosynthesis; UDP-N-acetyl-alpha-D-glucosamine from N-acetyl-alpha-D-glucosamine 1-phosphate: step 1/1. The sequence is that of Probable UDP-N-acetylglucosamine pyrophosphorylase (uap1) from Dictyostelium discoideum (Social amoeba).